A 134-amino-acid chain; its full sequence is Small ribosomal subunit protein uS11 (134 aa).

Belongs to the universal ribosomal protein uS11 family. Part of the 30S ribosomal subunit. Interacts with proteins S7 and S18. Binds to IF-3.

Functionally, located on the platform of the 30S subunit, it bridges several disparate RNA helices of the 16S rRNA. Forms part of the Shine-Dalgarno cleft in the 70S ribosome. This chain is Small ribosomal subunit protein uS11, found in Albidiferax ferrireducens (strain ATCC BAA-621 / DSM 15236 / T118) (Rhodoferax ferrireducens).